A 313-amino-acid chain; its full sequence is Ribosomal RNA small subunit methyltransferase H (313 aa).

Residues 35 to 37 (GGH), Asp-55, Phe-79, Asp-101, and Gln-108 contribute to the S-adenosyl-L-methionine site.

It belongs to the methyltransferase superfamily. RsmH family.

It localises to the cytoplasm. The enzyme catalyses cytidine(1402) in 16S rRNA + S-adenosyl-L-methionine = N(4)-methylcytidine(1402) in 16S rRNA + S-adenosyl-L-homocysteine + H(+). Specifically methylates the N4 position of cytidine in position 1402 (C1402) of 16S rRNA. The polypeptide is Ribosomal RNA small subunit methyltransferase H (Salmonella typhi).